The sequence spans 398 residues: Elongation factor Tu (398 aa).

Residues 10–207 form the tr-type G domain; the sequence is KPHVNIGTIG…TADEYIPEPE (198 aa). The tract at residues 19–26 is G1; that stretch reads GHVDHGKT. GTP is bound at residue 19–26; that stretch reads GHVDHGKT. Threonine 26 contributes to the Mg(2+) binding site. Residues 63–67 are G2; sequence GITIN. Residues 84–87 form a G3 region; sequence DAPG. Residues 84 to 88 and 139 to 142 each bind GTP; these read DAPGH and NKID. The G4 stretch occupies residues 139–142; it reads NKID. The interval 177-179 is G5; that stretch reads SAL.

This sequence belongs to the TRAFAC class translation factor GTPase superfamily. Classic translation factor GTPase family. EF-Tu/EF-1A subfamily. As to quaternary structure, monomer.

Its subcellular location is the cytoplasm. The catalysed reaction is GTP + H2O = GDP + phosphate + H(+). GTP hydrolase that promotes the GTP-dependent binding of aminoacyl-tRNA to the A-site of ribosomes during protein biosynthesis. The protein is Elongation factor Tu of Streptococcus uberis (strain ATCC BAA-854 / 0140J).